Reading from the N-terminus, the 101-residue chain is NADH-quinone oxidoreductase subunit K (101 aa).

3 helical membrane-spanning segments follow: residues Leu4 to Leu24, Ile30 to Phe50, and Phe62 to Val82.

The protein belongs to the complex I subunit 4L family. As to quaternary structure, NDH-1 is composed of 14 different subunits. Subunits NuoA, H, J, K, L, M, N constitute the membrane sector of the complex.

The protein localises to the cell inner membrane. The catalysed reaction is a quinone + NADH + 5 H(+)(in) = a quinol + NAD(+) + 4 H(+)(out). Functionally, NDH-1 shuttles electrons from NADH, via FMN and iron-sulfur (Fe-S) centers, to quinones in the respiratory chain. The immediate electron acceptor for the enzyme in this species is believed to be ubiquinone. Couples the redox reaction to proton translocation (for every two electrons transferred, four hydrogen ions are translocated across the cytoplasmic membrane), and thus conserves the redox energy in a proton gradient. This is NADH-quinone oxidoreductase subunit K from Xylella fastidiosa (strain 9a5c).